The primary structure comprises 114 residues: UPF0473 protein OEOE_1164 (114 aa).

The protein belongs to the UPF0473 family.

This Oenococcus oeni (strain ATCC BAA-331 / PSU-1) protein is UPF0473 protein OEOE_1164.